Here is a 455-residue protein sequence, read N- to C-terminus: N(5)-hydroxyornithine:cis-anhydromevalonyl coenzyme A-N(5)-transacylase SIDF (455 aa).

The PTS1-type peroxisomal targeting signal signature appears at 453-455 (PKL).

The protein belongs to the lysine N-acyltransferase mbtK family.

The protein resides in the peroxisome. Its pathway is siderophore biosynthesis. Hydroxyornithine transacylase; part of the gene cluster that mediates the biosynthesis of at least 11 siderophores, including beauverichelin A, dimerumic acid (DA), Na-dimethyl coprogen (NADC), eleutherazine B, ferricrocin (FC), fusarinine A, fusarinine C (FsC), metachelin A, mevalonolactone, rhodotorulic acid (RA) and tenellin. This cocktail of siderophores for iron metabolism is essential for virulence, and more specifically for the fungal virulence in penetrating through the host cuticle. Siderophore synthesis is also involved in conidial germination under iron-deficient conditions. For biosynthesis of fusarinine C, the transacylase SIDF transfers anhydromevalonyl to N(5)-hydroxyornithine. The required anhydromevalonyl-CoA moiety is derived from mevalonate by CoA ligation and dehydration catalyzed by SIDI and sidH respectively. The sequence is that of N(5)-hydroxyornithine:cis-anhydromevalonyl coenzyme A-N(5)-transacylase SIDF from Beauveria bassiana (strain ARSEF 2860) (White muscardine disease fungus).